Reading from the N-terminus, the 499-residue chain is Serine/threonine-protein phosphatase 5 (499 aa).

The tract at residues M1 to T24 is disordered. The residue at position 2 (A2) is an N-acetylalanine. 3 TPR repeats span residues A28–N61, A62–Y95, and I96–D129. A catalytic region spans residues G184 to M499. Positions 242, 244, and 271 each coordinate Mn(2+). Substrate is bound at residue H244. Residues R275 and N303–H304 each bind substrate. Position 303 (N303) interacts with Mn(2+). Residue H304 is the Proton donor/acceptor of the active site. H352 contributes to the Mn(2+) binding site. Residues R400 and H427 each coordinate substrate. H427 contacts Mn(2+). The interval Q495 to M499 is required for autoinhibition.

This sequence belongs to the PPP phosphatase family. PP-5 (PP-T) subfamily. As to quaternary structure, probably forms a complex composed of chaperones HSP90 and HSP70, co-chaperones STIP1/HOP, CDC37, PPP5C, PTGES3/p23, TSC1 and client protein TSC2. Probably forms a complex composed of chaperones HSP90 and HSP70, co-chaperones CDC37, PPP5C, TSC1 and client protein TSC2, CDK4, AKT, RAF1 and NR3C1; this complex does not contain co-chaperones STIP1/HOP and PTGES3/p23. Part of a complex with HSP90/HSP90AA1 and steroid receptors. Interacts (via TPR repeats) with HSP90AA1 (via TPR repeat-binding motif) or HSPA1A/HSPA1B; the interaction is direct and activates the phosphatase activity. Dissociates from HSPA1A/HSPA1B and HSP90AA1 in response to arachidonic acid. Interacts with CPNE1 (via VWFA domain). Interacts with CDC16, CDC27. Interacts with KLHDC10 (via the 6 Kelch repeats); inhibits the phosphatase activity on MAP3K5. Interacts with ATM and ATR; both interactions are induced by DNA damage and enhance ATM and ATR kinase activity. Interacts with RAD17; reduced by DNA damage. Interacts with nuclear receptors such as NR3C1/GCR and PPARG (activated by agonist); regulates their transactivation activities. Interacts (via TPR repeats) with S100 proteins S100A1, S100A2, S100A6, S100B and S100P; the interactions are calcium-dependent, strongly activate PPP5C phosphatase activity and compete with HSP90AA1 and MAP3K5 interactions. Interacts with SMAD2 and SMAD3 but not with SMAD1; decreases SMAD3 phosphorylation and protein levels. Interacts (via TPR repeats) with CRY1 and CRY2; the interaction with CRY2 down-regulates the phosphatase activity on CSNK1E. Interacts (via TPR repeats) with the active form of RAC1, GNA12 or GNA13; these interactions activate the phosphatase activity and translocate PPP5C to the cell membrane. Interacts with FLCN. Mg(2+) serves as cofactor. The cofactor is Mn(2+). In terms of processing, activated by at least two different proteolytic cleavages producing a 56 kDa and a 50 kDa form. In terms of tissue distribution, expressed in liver (at protein level) and brain, enriched in suprachiasmatic nuclei.

It localises to the nucleus. Its subcellular location is the cytoplasm. The protein localises to the cell membrane. It carries out the reaction O-phospho-L-seryl-[protein] + H2O = L-seryl-[protein] + phosphate. It catalyses the reaction O-phospho-L-threonyl-[protein] + H2O = L-threonyl-[protein] + phosphate. Its activity is regulated as follows. Autoinhibited. In the autoinhibited state, the TPR domain interacts with the catalytic region and prevents substrate access to the catalytic pocket. Allosterically activated by various polyunsaturated fatty acids, free long-chain fatty-acids and long-chain fatty acyl-CoA esters, arachidonic acid being the most effective activator. HSP90A and probably RAC1, GNA12 and GNA13 can also release the autoinhibition by the TPR repeat. Activation by RAC1, GNA12 and GNA13 is synergistic with the one produced by fatty acids binding. Inhibited by okadaic acid. Functionally, serine/threonine-protein phosphatase that dephosphorylates a myriad of proteins involved in different signaling pathways including the kinases CSNK1E, ASK1/MAP3K5, PRKDC and RAF1, the nuclear receptors NR3C1, PPARG, ESR1 and ESR2, SMAD proteins and TAU/MAPT. Implicated in wide ranging cellular processes, including apoptosis, differentiation, DNA damage response, cell survival, regulation of ion channels or circadian rhythms, in response to steroid and thyroid hormones, calcium, fatty acids, TGF-beta as well as oxidative and genotoxic stresses. Participates in the control of DNA damage response mechanisms such as checkpoint activation and DNA damage repair through, for instance, the regulation ATM/ATR-signaling and dephosphorylation of PRKDC and TP53BP1. Inhibits ASK1/MAP3K5-mediated apoptosis induced by oxidative stress. Plays a positive role in adipogenesis, mainly through the dephosphorylation and activation of PPARG transactivation function. Also dephosphorylates and inhibits the anti-adipogenic effect of NR3C1. Regulates the circadian rhythms, through the dephosphorylation and activation of CSNK1E. May modulate TGF-beta signaling pathway by the regulation of SMAD3 phosphorylation and protein expression levels. Dephosphorylates and may play a role in the regulation of TAU/MAPT. Through their dephosphorylation, may play a role in the regulation of ions channels such as KCNH2. Dephosphorylate FNIP1, disrupting interaction with HSP90AA1/Hsp90. The sequence is that of Serine/threonine-protein phosphatase 5 (Ppp5c) from Mus musculus (Mouse).